We begin with the raw amino-acid sequence, 516 residues long: Serine carboxypeptidase II-3 (516 aa).

Residues 1–20 (MKCTVVALVLLVAVQCLVLG) form the signal peptide. A propeptide spanning residues 21–77 (AGPAAAAKARRTRQGDYLNRLRGSPSSRASWESLAAVEEQTTTKAAGRPAPVAAAVE) is cleaved from the precursor. 3 cysteine pairs are disulfide-bonded: Cys-143/Cys-391, Cys-300/Cys-315, and Cys-339/Cys-359. 2 N-linked (GlcNAc...) asparagine glycosylation sites follow: Asn-194 and Asn-205. Ser-236 is an active-site residue. Asn-301 carries N-linked (GlcNAc...) asparagine glycosylation. A propeptide spans 342 to 352 (EKLVTPPIAPS) (linker peptide). Asn-380 carries N-linked (GlcNAc...) asparagine glycosylation. Catalysis depends on residues Asp-427 and His-484.

This sequence belongs to the peptidase S10 family. In terms of assembly, carboxypeptidase II is a dimer, where each monomer is composed of two chains linked by a disulfide bond. In terms of processing, the linker peptide is endoproteolytically excised during enzyme maturation.

The catalysed reaction is Preferential release of a C-terminal arginine or lysine residue.. This Hordeum vulgare (Barley) protein is Serine carboxypeptidase II-3 (CXP;2-3).